A 955-amino-acid polypeptide reads, in one-letter code: Disintegrin and metalloproteinase domain-containing protein 19 (955 aa).

Residues 1–25 (MPGGAGAARLCLLAFALQPLRPRAA) form the signal peptide. Residues 26–202 (REPGWTRGSE…QTKKRPRRMK (177 aa)) constitute a propeptide that is removed on maturation. The Cysteine switch motif lies at 130 to 137 (STCRGIRG). Cysteine 132 is a binding site for Zn(2+). Asparagine 144 carries N-linked (GlcNAc...) asparagine glycosylation. Residues 203–699 (REDLNSMKYV…IDSGPMPPES (497 aa)) are Extracellular-facing. One can recognise a Peptidase M12B domain in the interval 210 to 408 (KYVELYLVAD…GGGMCLSNMP (199 aa)). 3 disulfides stabilise this stretch: cysteine 320-cysteine 403, cysteine 360-cysteine 387, and cysteine 361-cysteine 370. Residue histidine 345 coordinates Zn(2+). Glutamate 346 is an active-site residue. 2 residues coordinate Zn(2+): histidine 349 and histidine 355. The region spanning 416–502 (GRRCGNGYLE…HCPTNFYQMD (87 aa)) is the Disintegrin domain. N-linked (GlcNAc...) asparagine glycosylation is found at asparagine 444 and asparagine 447. Cysteine 474 and cysteine 494 are oxidised to a cystine. N-linked (GlcNAc...) asparagine glycosylation occurs at asparagine 645. In terms of domain architecture, EGF-like spans 650-682 (ETEGCGKKCNGHGVCNNNQNCHCLPGWAPPFCN). 3 cysteine pairs are disulfide-bonded: cysteine 654-cysteine 664, cysteine 658-cysteine 670, and cysteine 672-cysteine 681. The chain crosses the membrane as a helical span at residues 700–720 (VGPVVAGVLVAILVLAVLMLM). Residues 721 to 955 (YYCCRQNNKL…AKHSCFLVPA (235 aa)) lie on the Cytoplasmic side of the membrane. Polar residues predominate over residues 753–771 (SQNSGTGHANPTFKLQTPQ). Residues 753-917 (SQNSGTGHAN…LKVKAGTRGL (165 aa)) are disordered. 2 stretches are compositionally biased toward pro residues: residues 787–796 (SQPPPRPPPD) and 833–844 (RPPPSRPIPPAP). The SH3-binding motif lies at 833 to 844 (RPPPSRPIPPAP).

Interacts with SH3PXD2A. Zn(2+) serves as cofactor. The precursor is cleaved by a furin endopeptidase. Expressed in many normal organ tissues and several cancer cell lines.

Its subcellular location is the membrane. Participates in the proteolytic processing of beta-type neuregulin isoforms which are involved in neurogenesis and synaptogenesis, suggesting a regulatory role in glial cell. Also cleaves alpha-2 macroglobulin. May be involved in osteoblast differentiation and/or osteoblast activity in bone. The polypeptide is Disintegrin and metalloproteinase domain-containing protein 19 (ADAM19) (Homo sapiens (Human)).